A 93-amino-acid chain; its full sequence is Large ribosomal subunit protein uL23cz/uL23cy (93 aa).

This sequence belongs to the universal ribosomal protein uL23 family. As to quaternary structure, part of the 50S ribosomal subunit.

The protein localises to the plastid. Its subcellular location is the chloroplast. Its function is as follows. Binds to 23S rRNA. This is Large ribosomal subunit protein uL23cz/uL23cy (rpl23-A) from Oryza nivara (Indian wild rice).